The primary structure comprises 704 residues: Protein NBR1 homolog (704 aa).

The residue at position 1 (Met-1) is an N-acetylmethionine. In terms of domain architecture, PB1 spans 7–92; sequence ALVVKVSYGG…KFLKINVNAG (86 aa). 3 stretches are compositionally biased toward polar residues: residues 95–108, 171–189, and 223–233; these read TNSA…SSTP, PQES…SGAS, and HSKTSGHVPNS. 2 disordered regions span residues 95-114 and 171-233; these read TNSA…MPNP and PQES…VPNS. The ZZ-type; degenerate zinc-finger motif lies at 286 to 336; the sequence is HKGIRCDGCGVLPITGPRFKSKVKEDYDLCTICYSVMGNEGDYTRMDKPVS. 4 residues coordinate Zn(2+): Cys-291, Cys-294, Cys-315, and Cys-318. Positions 657–701 constitute a UBA domain; sequence GVSEWDPILEELQEMGFCDDVTNKRLLKKNNGSIKGVVMDLLTGE. The LIR signature appears at 661–664; the sequence is WDPI.

As to quaternary structure, homodimer. Interacts with ATG8A, ATG8B, ATG8C, ATG8D, ATG8F and ATG8I. Binds to ubiquitin.

The protein localises to the cytoplasm. It is found in the vacuole. In terms of biological role, autophagic substrate degraded in the vacuole by non-selective autophagy. Requires ATG8 protein expression to be recognized as an autophagic substrate. Acts probably as a receptor for autophagosomal degradation of ubiquitinated proteins. Targets ubiquitinated protein aggregates derived from denatured or damaged non-native proteins generated under stress conditions. Functions additively with the E3 ubiquitin-protein ligase CHIP for autophagosomal degradation of proteotoxic aggregates formed under stress conditions. In Arabidopsis thaliana (Mouse-ear cress), this protein is Protein NBR1 homolog.